We begin with the raw amino-acid sequence, 429 residues long: Ribosomal RNA small subunit methyltransferase B (429 aa).

S-adenosyl-L-methionine is bound by residues 254-260 (CAAPGGK), Asp277, Asp303, and Asp322. The active-site Nucleophile is Cys375.

This sequence belongs to the class I-like SAM-binding methyltransferase superfamily. RsmB/NOP family.

It localises to the cytoplasm. It carries out the reaction cytidine(967) in 16S rRNA + S-adenosyl-L-methionine = 5-methylcytidine(967) in 16S rRNA + S-adenosyl-L-homocysteine + H(+). In terms of biological role, specifically methylates the cytosine at position 967 (m5C967) of 16S rRNA. The sequence is that of Ribosomal RNA small subunit methyltransferase B from Yersinia pseudotuberculosis serotype O:1b (strain IP 31758).